The following is an 89-amino-acid chain: Protein YihD (89 aa).

To H.influenzae HI_0845.

This is Protein YihD (yihD) from Escherichia coli O157:H7.